The sequence spans 356 residues: uncharacterized protein (356 aa).

Residues 25-72 are disordered; the sequence is EENNQENNKKFIEEFYPDKESDKNFSDDDSDDSDDSDDSENSDEEFDN. Residues 31–50 are compositionally biased toward basic and acidic residues; the sequence is NNKKFIEEFYPDKESDKNFS. Residues 51 to 70 show a composition bias toward acidic residues; that stretch reads DDDSDDSDDSDDSENSDEEF. A coiled-coil region spans residues 328–356; it reads EDTLNHSHSNKIKELENKITELKYQNEIN.

It belongs to the mimivirus L17/R827 family.

This is an uncharacterized protein from Acanthamoeba polyphaga mimivirus (APMV).